Consider the following 350-residue polypeptide: Phenylalanine--tRNA ligase alpha subunit (350 aa).

Glu259 is a binding site for Mg(2+).

This sequence belongs to the class-II aminoacyl-tRNA synthetase family. Phe-tRNA synthetase alpha subunit type 1 subfamily. Tetramer of two alpha and two beta subunits. The cofactor is Mg(2+).

The protein resides in the cytoplasm. The catalysed reaction is tRNA(Phe) + L-phenylalanine + ATP = L-phenylalanyl-tRNA(Phe) + AMP + diphosphate + H(+). This chain is Phenylalanine--tRNA ligase alpha subunit, found in Rickettsia typhi (strain ATCC VR-144 / Wilmington).